Consider the following 470-residue polypeptide: Xaa-Pro aminopeptidase 2 (470 aa).

Residues Asp-287, Asp-299, His-382, Glu-413, and Glu-437 each contribute to the Mn(2+) site.

The protein belongs to the peptidase M24B family. In terms of assembly, homodimer. Mn(2+) is required as a cofactor.

It carries out the reaction Release of any N-terminal amino acid, including proline, that is linked to proline, even from a dipeptide or tripeptide.. The polypeptide is Xaa-Pro aminopeptidase 2 (pepP2) (Streptomyces coelicolor (strain ATCC BAA-471 / A3(2) / M145)).